Reading from the N-terminus, the 206-residue chain is Anti-sigma-W factor RsiW (206 aa).

Residues 1–87 (MSCPEHIVQL…ASINRWLKAH (87 aa)) lie on the Cytoplasmic side of the membrane. Zn(2+) is bound by residues H30, C34, and C37. A helical transmembrane segment spans residues 88–108 (PFLVAAALFAILMGGSFFSSW). Topologically, residues 109–206 (KNDHDFSVSS…SVFGVKESKE (98 aa)) are extracellular.

The protein belongs to the zinc-associated anti-sigma factor (ZAS) superfamily. Anti-sigma-W factor family. It depends on Zn(2+) as a cofactor. Post-translationally, is processed by three successive proteolytic events. First, the extracellular region of RsiW is cleaved by PrsW (Site-1 cleavage) in response to cell envelope stresses. Next, it undergoes cleavage at an intramembrane site (Site-2 cleavage) mediated by RasP. This cleavage uncovers a cryptic proteolytic tag with conserved alanine residues in the transmembrane segment, that is recognized mainly by the ClpXP protease, which completely degrades the protein in the cytoplasm and leads to the induction of the sigma-W-controlled genes.

It localises to the membrane. Is the anti-sigma factor for SigW. The presence of RsiW leads to the inactivation of SigW, and its proteolytic destruction to sigma-W activation. This is Anti-sigma-W factor RsiW (rsiW) from Bacillus licheniformis (strain ATCC 14580 / DSM 13 / JCM 2505 / CCUG 7422 / NBRC 12200 / NCIMB 9375 / NCTC 10341 / NRRL NRS-1264 / Gibson 46).